Consider the following 101-residue polypeptide: Urease subunit beta (101 aa).

Belongs to the urease beta subunit family. Heterotrimer of UreA (gamma), UreB (beta) and UreC (alpha) subunits. Three heterotrimers associate to form the active enzyme.

The protein resides in the cytoplasm. The enzyme catalyses urea + 2 H2O + H(+) = hydrogencarbonate + 2 NH4(+). It participates in nitrogen metabolism; urea degradation; CO(2) and NH(3) from urea (urease route): step 1/1. This is Urease subunit beta from Ruegeria pomeroyi (strain ATCC 700808 / DSM 15171 / DSS-3) (Silicibacter pomeroyi).